The sequence spans 271 residues: Putative protein FAM220BP (271 aa).

In Homo sapiens (Human), this protein is Putative protein FAM220BP (FAM220BP).